The following is a 1185-amino-acid chain: Pyruvate carboxylase (1185 aa).

A Biotin carboxylation domain is found at 32–484 (KFTKVLVANR…WTTFIDDTPE (453 aa)). ATP is bound by residues lysine 150, glutamate 234, and histidine 269. The ATP-grasp domain occupies 154 to 351 (RAIAIRCGVP…IVSAQLHVAA (198 aa)). Arginine 326 is a catalytic residue. Residues 570 to 838 (GLIMDTTWRD…QLEFDNNQLR (269 aa)) form the Pyruvate carboxyltransferase domain. Substrate-binding positions include 578 to 582 (RDAHQ) and arginine 651. Aspartate 579 contributes to the a divalent metal cation binding site. Residues lysine 747, histidine 777, and histidine 779 each contribute to the a divalent metal cation site. Lysine 747 is modified (N6-carboxylysine). Residue threonine 912 participates in substrate binding. The region spanning 1108-1183 (RADPGNPGHV…NGGDLCAVLE (76 aa)) is the Biotinyl-binding domain. Lysine 1149 carries the post-translational modification N6-biotinyllysine.

It depends on biotin as a cofactor. The cofactor is Zn(2+).

The protein localises to the cytoplasm. It catalyses the reaction hydrogencarbonate + pyruvate + ATP = oxaloacetate + ADP + phosphate + H(+). It functions in the pathway carbohydrate biosynthesis; gluconeogenesis. In terms of biological role, pyruvate carboxylase catalyzes a 2-step reaction, involving the ATP-dependent carboxylation of the covalently attached biotin in the first step and the transfer of the carboxyl group to pyruvate in the second. The chain is Pyruvate carboxylase (pyr1) from Schizosaccharomyces pombe (strain 972 / ATCC 24843) (Fission yeast).